Reading from the N-terminus, the 445-residue chain is MKHYEANFDGLVGPTHNYAGLSYGNVASLNNAAAISSPKAAAKQGLKKAKALADLGLAQGMLAPQERPDLHTLRRIGFSGTDAEVLNKAAKQAPALLRACCSASSMWTANAATVSPSADTHDGKIHFTPANLVDKLHRSIEPVTTGNILAATFNNSRYFHHHQHLPEHVSFGDEGAANHTRLCSEYGHAGIELFVYGQEATNPNAPKPKKYPARQTLEASQAIARLHQLDDESSVFIQQNPDVIDQGVFHNDVIAVGNQNVLFYHEQAFVDTQKKLAEIQDKFNGKELHFIEVPTAKVGIQDAVKSYLFNTQIVTLPNGEMAIIAPTNCQENEAVYAYLNELVTLGTPIKQVHYFDVKQSMQNGGGPACLRLRVAMNETELAAVNPNTLMNDELFNRLNLWVEKHYRDELAIDDLADPQLIVESRTALDELTQIMKLGSVYQFQK.

Substrate contacts are provided by residues 19–28, Asn110, and 137–138; these read AGLSYGNVAS and HR. The active site involves Glu174. Arg214 lines the substrate pocket. His250 is a catalytic residue. Positions 252 and 363 each coordinate substrate. Cys369 (nucleophile) is an active-site residue.

It belongs to the succinylarginine dihydrolase family. In terms of assembly, homodimer.

The enzyme catalyses N(2)-succinyl-L-arginine + 2 H2O + 2 H(+) = N(2)-succinyl-L-ornithine + 2 NH4(+) + CO2. The protein operates within amino-acid degradation; L-arginine degradation via AST pathway; L-glutamate and succinate from L-arginine: step 2/5. Functionally, catalyzes the hydrolysis of N(2)-succinylarginine into N(2)-succinylornithine, ammonia and CO(2). This is N-succinylarginine dihydrolase from Shewanella loihica (strain ATCC BAA-1088 / PV-4).